The following is a 147-amino-acid chain: MAAQRLGKRVLSKLQSPSRARGPGGSPGGLQKRHARVTVKYDRRELQRRLDVEKWIDGRLEELYRGMEADMPDEINIDELLELESEEERSRKIQGLLKSCGKPVEDFIQELLAKLQGLHRQPGLRQPSPSHDGSLSPLQDRARTAHP.

Residues 1 to 11 (MAAQRLGKRVL) are compositionally biased toward basic residues. The segment at 1–37 (MAAQRLGKRVLSKLQSPSRARGPGGSPGGLQKRHARV) is disordered. Residue Ser26 is modified to Phosphoserine. The inhibitory stretch occupies residues 35-120 (ARVTVKYDRR…LLAKLQGLHR (86 aa)). A Phosphothreonine; by PKC modification is found at Thr38. Residues 118–147 (LHRQPGLRQPSPSHDGSLSPLQDRARTAHP) are disordered. Over residues 127–137 (PSPSHDGSLSP) the composition is skewed to polar residues. A phosphoserine mark is found at Ser128, Ser134, and Ser136.

It belongs to the PP1 inhibitor family. Isoform 1 is detected in aorta and testis. Isoform 2 is detected in aorta.

The protein resides in the cytoplasm. Functionally, inhibitor of PPP1CA. Has over 1000-fold higher inhibitory activity when phosphorylated, creating a molecular switch for regulating the phosphorylation status of PPP1CA substrates and smooth muscle contraction. This chain is Protein phosphatase 1 regulatory subunit 14A (PPP1R14A), found in Homo sapiens (Human).